Reading from the N-terminus, the 821-residue chain is MSPWLKWHGPAMARLWGLCLLVLGFWRASLACPTSCKCSSARIWCTEPSPGIVAFPRLEPNSVDPENITEILIANQKRLEIINEDDVEAYVGLRNLTIVDSGLKFVAYKAFLKNSNLRHINFTRNKLTSLSRRHFRHLDLSDLILTGNPFTCSCDIMWLKTLQETKSSPDTQDLYCLNESSKNMPLANLQIPNCGLPSARLAAPNLTVEEGKSVTLSCSVGGDPLPTLYWDVGNLVSKHMNETSHTQGSLRITNISSDDSGKQISCVAENLVGEDQDSVNLTVHFAPTITFLESPTSDHHWCIPFTVRGNPKPALQWFYNGAILNESKYICTKIHVTNHTEYHGCLQLDNPTHMNNGDYTLMAKNEYGKDERQISAHFMGRPGVDYETNPNYPEVLYEDWTTPTDIGDTTNKSNEIPSTDVADQSNREHLSVYAVVVIASVVGFCLLVMLLLLKLARHSKFGMKGPASVISNDDDSASPLHHISNGSNTPSSSEGGPDAVIIGMTKIPVIENPQYFGITNSQLKPDTFVQHIKRHNIVLKRELGEGAFGKVFLAECYNLCPEQDKILVAVKTLKDASDNARKDFHREAELLTNLQHEHIVKFYGVCVEGDPLIMVFEYMKHGDLNKFLRAHGPDAVLMAEGNPPTELTQSQMLHIAQQIAAGMVYLASQHFVHRDLATRNCLVGENLLVKIGDFGMSRDVYSTDYYRVGGHTMLPIRWMPPESIMYRKFTTESDVWSLGVVLWEIFTYGKQPWYQLSNNEVIECITQGRVLQRPRTCPQEVYELMLGCWQREPHTRKNIKSIHTLLQNLAKASPVYLDILG.

The first 31 residues, 1–31 (MSPWLKWHGPAMARLWGLCLLVLGFWRASLA), serve as a signal peptide directing secretion. Disulfide bonds link Cys-32-Cys-38 and Cys-36-Cys-45. The LRRNT domain maps to 32 to 61 (CPTSCKCSSARIWCTEPSPGIVAFPRLEPN). At 32–429 (CPTSCKCSSA…DVADQSNREH (398 aa)) the chain is on the extracellular side. N-linked (GlcNAc...) asparagine glycans are attached at residues Asn-67, Asn-95, and Asn-121. 2 LRR repeats span residues 92 to 113 (GLRN…AFLK) and 116 to 137 (NLRH…HFRH). Residues 148 to 196 (NPFTCSCDIMWLKTLQETKSSPDTQDLYCLNESSKNMPLANLQIPNCGL) form the LRRCT domain. 2 disulfide bridges follow: Cys-152–Cys-176 and Cys-154–Cys-194. N-linked (GlcNAc...) asparagine glycosylation is found at Asn-178, Asn-205, Asn-241, Asn-254, Asn-280, Asn-325, Asn-338, Asn-350, and Asn-411. Ig-like C2-type domains lie at 197 to 282 (PSAR…VNLT) and 301 to 365 (WCIP…MAKN). The cysteines at positions 218 and 266 are disulfide-linked. The cysteines at positions 302 and 345 are disulfide-linked. A helical membrane pass occupies residues 430-453 (LSVYAVVVIASVVGFCLLVMLLLL). The tract at residues 454–465 (KLARHSKFGMKG) is interaction with MAPK8IP3/JIP3. Topologically, residues 454–821 (KLARHSKFGM…ASPVYLDILG (368 aa)) are cytoplasmic. The disordered stretch occupies residues 474–497 (DDSASPLHHISNGSNTPSSSEGGP). Residues 484-494 (SNGSNTPSSSE) show a composition bias toward polar residues. Tyr-515 carries the post-translational modification Phosphotyrosine. One can recognise a Protein kinase domain in the interval 537–806 (IVLKRELGEG…KNIKSIHTLL (270 aa)). ATP is bound by residues 543-551 (LGEGAFGKV) and Lys-571. Residue Asp-675 is the Proton acceptor of the active site. Residues Tyr-701, Tyr-705, Tyr-706, and Tyr-816 each carry the phosphotyrosine; by autocatalysis modification.

The protein belongs to the protein kinase superfamily. Tyr protein kinase family. Insulin receptor subfamily. As to quaternary structure, exists in a dynamic equilibrium between monomeric (low affinity) and dimeric (high affinity) structures. Interacts (phosphorylated upon activation by BDNF) with SHC1; mediates SHC1 phosphorylation and activation. Interacts (phosphorylated upon activation by BDNF) with PLCG1 and/or PLCG2; mediates PLCG1 phosphorylation and activation. Interacts with SH2B1 and SH2B2. Interacts with NGFR; may regulate the ligand specificity of the receptor. Interacts with SORCS2; this interaction is important for normal targeting to post-synaptic densities in response to high-frequency stimulation. Interacts (phosphorylated upon ligand-binding) with SH2D1A; regulates NTRK2. Interacts with SQSTM1 and KIDINS220. Interacts (phosphorylated upon ligand-binding) with FRS2; activates the MAPK signaling pathway. Interacts with APPL1. Interacts with MAPK8IP3/JIP3 and KLC1; interaction with KLC1 is mediated by MAPK8IP3/JIP3. Interacts with SORL1; this interaction facilitates NTRK2 trafficking between synaptic plasma membranes, postsynaptic densities and cell soma, hence positively regulates BDNF signaling. Interacts with SLITRK2. Phosphorylated. Undergoes ligand-mediated autophosphorylation that is required for interaction with SHC1 and PLCG1 and other downstream effectors. Some isoforms are not phosphorylated. Post-translationally, ubiquitinated. Undergoes polyubiquitination upon activation; regulated by NGFR. Ubiquitination regulates the internalization of the receptor. Expressed in the brain, in neurons (at protein level). Detected in hippocampus (at protein level). Widely expressed in the central and peripheral nervous system. The different forms are differentially expressed in various cell types. Isoform GP95-TRKB is specifically expressed in glial cells.

The protein resides in the cell membrane. Its subcellular location is the endosome membrane. The protein localises to the early endosome membrane. It localises to the cell projection. It is found in the axon. The protein resides in the dendrite. Its subcellular location is the cytoplasm. The protein localises to the perinuclear region. It localises to the postsynaptic density. It catalyses the reaction L-tyrosyl-[protein] + ATP = O-phospho-L-tyrosyl-[protein] + ADP + H(+). Its activity is regulated as follows. The formation of active receptors dimers able to fully transduce the ligand-mediated signal, may be negatively regulated by the formation of inactive heterodimers with the non-catalytic isoforms. The neuronal activity and the influx of calcium positively regulate the kinase activity and the internalization of the receptor which are both important for active signaling. Regulated by NGFR that may control the internalization of the receptor. NGFR may also stimulate the activation by BDNF compared to NTF3 and NTF4. SH2D1A inhibits the autophosphorylation of the receptor, and alters the recruitment and activation of downstream effectors and signaling cascades. Functionally, receptor tyrosine kinase involved in the development and the maturation of the central and the peripheral nervous systems through regulation of neuron survival, proliferation, migration, differentiation, and synapse formation and plasticity. Receptor for BDNF/brain-derived neurotrophic factor and NTF4/neurotrophin-4. Alternatively can also bind NTF3/neurotrophin-3 which is less efficient in activating the receptor but regulates neuron survival through NTRK2. Upon ligand-binding, undergoes homodimerization, autophosphorylation and activation. Recruits, phosphorylates and/or activates several downstream effectors including SHC1, FRS2, SH2B1, SH2B2 and PLCG1 that regulate distinct overlapping signaling cascades. Through SHC1, FRS2, SH2B1, SH2B2 activates the GRB2-Ras-MAPK cascade that regulates for instance neuronal differentiation including neurite outgrowth. Through the same effectors controls the Ras-PI3 kinase-AKT1 signaling cascade that mainly regulates growth and survival. Through PLCG1 and the downstream protein kinase C-regulated pathways controls synaptic plasticity. Thereby, plays a role in learning and memory by regulating both short term synaptic function and long-term potentiation. PLCG1 also leads to NF-Kappa-B activation and the transcription of genes involved in cell survival. Hence, it is able to suppress anoikis, the apoptosis resulting from loss of cell-matrix interactions. Isoform GP95-TRKB may also play a role in neutrophin-dependent calcium signaling in glial cells and mediate communication between neurons and glia. This Mus musculus (Mouse) protein is BDNF/NT-3 growth factors receptor.